Reading from the N-terminus, the 238-residue chain is MPVRLYLIWGATTTGKTAQSVALARSAGAPVISLDRVQCCHELAVGSGRPSPSELLGTRREYLCEREVSRGVVSAAEANQLLLDKVARYATQERALILEGGSVSLINAMIRDARWSERGEWILRRIPVPGRAAFMAAARKRVREMLDPPPGQAGILDELQGLWGYPRNHAVLEDIDGYRQIIRYANALQVPICRITSIDPNAKALLIERIAQEYWEHALWQEQEFLGIPASWMRADDA.

The protein belongs to the isopentenyl transferase family.

The catalysed reaction is dimethylallyl diphosphate + AMP = N(6)-(dimethylallyl)adenosine 5'-phosphate + diphosphate. In terms of biological role, transfers dimethylallyl groups to AMP as part of the biosynthesis of cytokinin phytohormones. In Ralstonia nicotianae (strain ATCC BAA-1114 / GMI1000) (Ralstonia solanacearum), this protein is Adenylate dimethylallyltransferase (tzs).